Reading from the N-terminus, the 198-residue chain is GTP cyclohydrolase-2 (198 aa).

49–53 (RVHSE) contacts GTP. The Zn(2+) site is built by C54, C65, and C67. GTP contacts are provided by residues Q70, 92–94 (EGR), and T114. The active-site Proton acceptor is the D126. Residue R128 is the Nucleophile of the active site. Residues T149 and K154 each contribute to the GTP site.

The protein belongs to the GTP cyclohydrolase II family. As to quaternary structure, homodimer. The cofactor is Zn(2+).

It carries out the reaction GTP + 4 H2O = 2,5-diamino-6-hydroxy-4-(5-phosphoribosylamino)-pyrimidine + formate + 2 phosphate + 3 H(+). It functions in the pathway cofactor biosynthesis; riboflavin biosynthesis; 5-amino-6-(D-ribitylamino)uracil from GTP: step 1/4. In terms of biological role, catalyzes the conversion of GTP to 2,5-diamino-6-ribosylamino-4(3H)-pyrimidinone 5'-phosphate (DARP), formate and pyrophosphate. This is GTP cyclohydrolase-2 from Escherichia fergusonii (strain ATCC 35469 / DSM 13698 / CCUG 18766 / IAM 14443 / JCM 21226 / LMG 7866 / NBRC 102419 / NCTC 12128 / CDC 0568-73).